A 192-amino-acid polypeptide reads, in one-letter code: Ion-translocating oxidoreductase complex subunit B (192 aa).

A hydrophobic region spans residues 1 to 26 (MNTIWIAVGALTFLGLVFGAILGYAS). The 4Fe-4S domain maps to 32-91 (EDDPVVEKIDAILPQSQCGQCGYPGCRPYAEAVGLQGEKINRCAPGGEAVMLKIADLLNV). [4Fe-4S] cluster-binding residues include C49, C52, C57, C74, C117, C120, C123, C127, C147, C150, C153, and C157. 4Fe-4S ferredoxin-type domains are found at residues 108–137 (MLAV…GATR) and 138–167 (AMHT…LRPV).

This sequence belongs to the 4Fe4S bacterial-type ferredoxin family. RnfB subfamily. The complex is composed of six subunits: RsxA, RsxB, RsxC, RsxD, RsxE and RsxG. The cofactor is [4Fe-4S] cluster.

The protein localises to the cell inner membrane. Part of a membrane-bound complex that couples electron transfer with translocation of ions across the membrane. Required to maintain the reduced state of SoxR. The sequence is that of Ion-translocating oxidoreductase complex subunit B from Salmonella arizonae (strain ATCC BAA-731 / CDC346-86 / RSK2980).